We begin with the raw amino-acid sequence, 200 residues long: Protein GrpE (200 aa).

Residues 1–11 show a composition bias toward polar residues; the sequence is MSNQTNKAQDN. The segment at 1–25 is disordered; that stretch reads MSNQTNKAQDNQVEEIVEGELLNEN.

Belongs to the GrpE family. Homodimer.

The protein resides in the cytoplasm. In terms of biological role, participates actively in the response to hyperosmotic and heat shock by preventing the aggregation of stress-denatured proteins, in association with DnaK and GrpE. It is the nucleotide exchange factor for DnaK and may function as a thermosensor. Unfolded proteins bind initially to DnaJ; upon interaction with the DnaJ-bound protein, DnaK hydrolyzes its bound ATP, resulting in the formation of a stable complex. GrpE releases ADP from DnaK; ATP binding to DnaK triggers the release of the substrate protein, thus completing the reaction cycle. Several rounds of ATP-dependent interactions between DnaJ, DnaK and GrpE are required for fully efficient folding. This chain is Protein GrpE, found in Shewanella pealeana (strain ATCC 700345 / ANG-SQ1).